The sequence spans 291 residues: ATP synthase gamma chain (291 aa).

It belongs to the ATPase gamma chain family. In terms of assembly, F-type ATPases have 2 components, CF(1) - the catalytic core - and CF(0) - the membrane proton channel. CF(1) has five subunits: alpha(3), beta(3), gamma(1), delta(1), epsilon(1). CF(0) has three main subunits: a, b and c.

It localises to the cell inner membrane. Functionally, produces ATP from ADP in the presence of a proton gradient across the membrane. The gamma chain is believed to be important in regulating ATPase activity and the flow of protons through the CF(0) complex. The chain is ATP synthase gamma chain from Aquifex aeolicus (strain VF5).